The chain runs to 392 residues: Succinate--CoA ligase [ADP-forming] subunit beta (392 aa).

Positions lysine 9–glutamate 247 constitute an ATP-grasp domain. ATP is bound by residues lysine 49, glycine 56–glycine 58, glutamate 102, leucine 105, and glutamate 110. The Mg(2+) site is built by asparagine 202 and aspartate 216. Substrate-binding positions include asparagine 267 and glycine 324–leucine 326.

Belongs to the succinate/malate CoA ligase beta subunit family. In terms of assembly, heterotetramer of two alpha and two beta subunits. Requires Mg(2+) as cofactor.

The catalysed reaction is succinate + ATP + CoA = succinyl-CoA + ADP + phosphate. It carries out the reaction GTP + succinate + CoA = succinyl-CoA + GDP + phosphate. Its pathway is carbohydrate metabolism; tricarboxylic acid cycle; succinate from succinyl-CoA (ligase route): step 1/1. Succinyl-CoA synthetase functions in the citric acid cycle (TCA), coupling the hydrolysis of succinyl-CoA to the synthesis of either ATP or GTP and thus represents the only step of substrate-level phosphorylation in the TCA. The beta subunit provides nucleotide specificity of the enzyme and binds the substrate succinate, while the binding sites for coenzyme A and phosphate are found in the alpha subunit. The polypeptide is Succinate--CoA ligase [ADP-forming] subunit beta (Koribacter versatilis (strain Ellin345)).